A 184-amino-acid chain; its full sequence is Tumor necrosis factor alpha-induced protein 8-like protein 2 (184 aa).

Belongs to the TNFAIP8 family. TNFAIP8L2 subfamily. May interact with CASP8; however, such result is unclear since could not reproduce the interaction with CASP8. Interacts with RAC1. Post-translationally, ubiquitinated in a BTRC-depdent manner; leading to degradation mediated through the proteasome pathway.

The protein resides in the cytoplasm. It localises to the nucleus. It is found in the lysosome. In terms of biological role, acts as a negative regulator of innate and adaptive immunity by maintaining immune homeostasis. Plays a regulatory role in the Toll-like signaling pathway by determining the strength of LPS-induced signaling and gene expression. Inhibits TCR-mediated T-cell activation and negatively regulate T-cell function to prevent hyperresponsiveness. Also inhibits autolysosome formation via negatively modulating MTOR activation by interacting with RAC1 and promoting the disassociation of the RAC1-MTOR complex. Plays an essential role in NK-cell biology by acting as a checkpoint and displaying an expression pattern correlating with NK-cell maturation process and by negatively regulating NK-cell maturation and antitumor immunity. Mechanistically, suppresses IL-15-triggered mTOR activity in NK-cells. The chain is Tumor necrosis factor alpha-induced protein 8-like protein 2 (TNFAIP8L2) from Rhinolophus ferrumequinum (Greater horseshoe bat).